We begin with the raw amino-acid sequence, 473 residues long: O-methyltransferase aclU (473 aa).

Residues Asp-320 and 354-356 (GDF) contribute to the S-adenosyl-L-methionine site. His-373 (proton acceptor) is an active-site residue.

It belongs to the class I-like SAM-binding methyltransferase superfamily. Cation-independent O-methyltransferase family. COMT subfamily.

Its pathway is mycotoxin biosynthesis. Its function is as follows. O-methyltransferase; part of the gene cluster that mediates the biosynthesis of aspirochlorine (or antibiotic A30641), an unusual halogenated spiro compound with distinctive antifungal properties due to selective inhibition of protein biosynthesis, and which is also active against bacteria, viruses, and murine tumor cells. The non-ribosomal peptide synthetase (NRPS) aclP is responsible the formation of the diketopiperazine (DKP) core from the condensation of 2 phenylalanine residues. One Phe residue is tailored into chlorotyrosine by hydroxylation and chlorination, whereas the second Phe undergoes an unprecedented C-C bond cleavage to be converted into glycine. After formation of the DKP, sulfur is incorporated into the DKP by conjugation with glutathione by aclG, followed by its stepwise degradation to the thiol by aclI, aclJ and aclK, and the dithiol oxidation by aclT. In addition, oxygenases (aclB, aclC, aclL and aclO) and O-methyltransferases (aclM and aclU) act as tailoring enzymes to produce the intermediate dechloroaspirochlorine. Ultimately, chlorination of dechloroaspirochlorine by the halogenase aclH is the last step in the aspirochlorine pathway. The sequence is that of O-methyltransferase aclU from Aspergillus oryzae (strain ATCC 42149 / RIB 40) (Yellow koji mold).